The primary structure comprises 180 residues: Adenine phosphoribosyltransferase (180 aa).

At Ser2 the chain carries N-acetylserine. A phosphoserine mark is found at Ser15 and Ser30. Phosphotyrosine is present on Tyr60. Phosphoserine is present on Ser66. N6-acetyllysine is present on Lys114. A Phosphothreonine modification is found at Thr135.

The protein belongs to the purine/pyrimidine phosphoribosyltransferase family. As to quaternary structure, homodimer.

The protein resides in the cytoplasm. It carries out the reaction AMP + diphosphate = 5-phospho-alpha-D-ribose 1-diphosphate + adenine. It functions in the pathway purine metabolism; AMP biosynthesis via salvage pathway; AMP from adenine: step 1/1. Its function is as follows. Catalyzes a salvage reaction resulting in the formation of AMP, that is energically less costly than de novo synthesis. The protein is Adenine phosphoribosyltransferase of Stochomys longicaudatus (Target rat).